Here is a 676-residue protein sequence, read N- to C-terminus: Probable potassium transport system protein Kup (676 aa).

12 helical membrane passes run 14 to 34 (GLLIAIGIVYGDIGTSPLYVM), 56 to 76 (ISLILWTVTLLTTVQTVIIAL), 97 to 117 (AAWLVWPALIGGAAILADGTL), 142 to 162 (VSNQTTVLVITIVILLVLFSI), 173 to 193 (AFGPIMLVWFAFLGVMGLINI), 219 to 239 (AGFAILGSIFLATTGAEALYS), 252 to 272 (SWPFVFVCLSLNYFGQGVWIL), 296 to 316 (LASIVLATLAAIIASQALITG), 345 to 365 (IYIPAVNKMLGITTIALVLFF), 376 to 396 (GLSITISMLTTTILLYEWLVL), 402 to 422 (LANLLFVIFFSTINILFMGSS), and 429 to 449 (GGYVSLLITLLIASVMVVWYF).

The protein belongs to the HAK/KUP transporter (TC 2.A.72) family.

It localises to the cell membrane. The enzyme catalyses K(+)(in) + H(+)(in) = K(+)(out) + H(+)(out). In terms of biological role, transport of potassium into the cell. Likely operates as a K(+):H(+) symporter. The sequence is that of Probable potassium transport system protein Kup from Lactobacillus delbrueckii subsp. bulgaricus (strain ATCC BAA-365 / Lb-18).